The sequence spans 338 residues: Hydroxyproline O-galactosyltransferase HPGT1 (338 aa).

Topologically, residues 1–12 are cytoplasmic; that stretch reads MARKGSSIRLSS. Residues 13–32 form a helical; Signal-anchor for type II membrane protein membrane-spanning segment; it reads SRISTLLLFMFATFASFYVA. The Lumenal segment spans residues 33 to 338; it reads GRLWQESQTR…WSSEAICAGV (306 aa).

This sequence belongs to the glycosyltransferase 31 family. The cofactor is Mn(2+). Expressed in roots, rosette leaves, cauline leaves, stems, flowers and siliques.

It localises to the golgi apparatus membrane. It functions in the pathway protein modification; protein glycosylation. In terms of biological role, possesses hydroxyproline O-galactosyltransferase activity. Transfers galactose from UDP-galactose to hydroxyproline residues in the arabinogalactan proteins (AGPs). Is specific for AGPs containing non-contiguous peptidyl hydroxyproline residues. The addition of galactose onto the peptidyl hydroxyproline residues in AGP core proteins represents the first committed step in arabinogalactan polysaccharide addition. AGP glycans play essential roles in both vegetative and reproductive plant growth. This Arabidopsis thaliana (Mouse-ear cress) protein is Hydroxyproline O-galactosyltransferase HPGT1.